Here is a 263-residue protein sequence, read N- to C-terminus: Phosphatidylglycerol--prolipoprotein diacylglyceryl transferase (263 aa).

A run of 4 helical transmembrane segments spans residues 6–26, 50–70, 85–105, and 112–132; these read VIFSIGPVSIYWYSLAYVLGI, LLTATIVGIILGGRLGYVLIY, TWEGGMSFHGGAIGVLLAVII, and IPTFYALDLVSCGVPIGLFLG. A 1,2-diacyl-sn-glycero-3-phospho-(1'-sn-glycerol) is bound at residue Arg133. 3 consecutive transmembrane segments (helical) span residues 169 to 189, 197 to 217, and 233 to 253; these read LYEALFEGLLLFAVANSLFFL, GALTGIAVMWYGIARFFVEFF, and MGQLLSIPMVLLGMLVYLGAL.

It belongs to the Lgt family.

It is found in the cell membrane. It catalyses the reaction L-cysteinyl-[prolipoprotein] + a 1,2-diacyl-sn-glycero-3-phospho-(1'-sn-glycerol) = an S-1,2-diacyl-sn-glyceryl-L-cysteinyl-[prolipoprotein] + sn-glycerol 1-phosphate + H(+). Its pathway is protein modification; lipoprotein biosynthesis (diacylglyceryl transfer). In terms of biological role, catalyzes the transfer of the diacylglyceryl group from phosphatidylglycerol to the sulfhydryl group of the N-terminal cysteine of a prolipoprotein, the first step in the formation of mature lipoproteins. The sequence is that of Phosphatidylglycerol--prolipoprotein diacylglyceryl transferase from Wolbachia pipientis wMel.